Here is a 353-residue protein sequence, read N- to C-terminus: Aromatic amino acid aminotransferase (353 aa).

At Lys-217 the chain carries N6-(pyridoxal phosphate)lysine.

The protein belongs to the class-II pyridoxal-phosphate-dependent aminotransferase family. In terms of assembly, homodimer. Requires pyridoxal 5'-phosphate as cofactor.

It carries out the reaction an aromatic L-alpha-amino acid + 2-oxoglutarate = an aromatic oxo-acid + L-glutamate. In terms of biological role, aminotransferase that catalyzes the conversion of aromatic amino acids and 2-oxoglutarate into corresponding aromatic oxo acids and L-glutamate. The sequence is that of Aromatic amino acid aminotransferase from Mycobacterium bovis (strain ATCC BAA-935 / AF2122/97).